We begin with the raw amino-acid sequence, 103 residues long: Large ribosomal subunit protein bL21 (103 aa).

It belongs to the bacterial ribosomal protein bL21 family. As to quaternary structure, part of the 50S ribosomal subunit. Contacts protein L20.

Functionally, this protein binds to 23S rRNA in the presence of protein L20. The chain is Large ribosomal subunit protein bL21 from Heliobacterium modesticaldum (strain ATCC 51547 / Ice1).